The following is a 395-amino-acid chain: E3 ubiquitin-protein ligase RDUF1 (395 aa).

2 disordered regions span residues 1–22 (MMPN…TTTT) and 107–130 (PVIV…EGDG). Residues 9-22 (TITPTTESTTTTTT) are compositionally biased toward low complexity. Residues 121-130 (ERVENEEGDG) show a composition bias toward basic and acidic residues. Residues 215-256 (CAVCTEVFEAGIEGREMPCKHIFHGDCIVPWLSIRNSCPVCR) form an RING-type; atypical zinc finger.

In terms of tissue distribution, expressed in root tips, leaf tips, junction of carpels and pedicels, stigma, anthers, pollen, vasculature of sepals and petals, immature seeds and embryos.

The protein localises to the cytoplasm. It is found in the cytosol. The protein resides in the nucleus. It catalyses the reaction S-ubiquitinyl-[E2 ubiquitin-conjugating enzyme]-L-cysteine + [acceptor protein]-L-lysine = [E2 ubiquitin-conjugating enzyme]-L-cysteine + N(6)-ubiquitinyl-[acceptor protein]-L-lysine.. The protein operates within protein modification; protein ubiquitination. In terms of biological role, E3 ubiquitin-protein ligase involved in the positive regulation of abscisic acid-dependent drought stress responses. Involved in the positive regulation of responses to salt and osmotic stresses during seed germination and early seedling development. Possesses E3 ubiquitin ligase activity in vitro. The polypeptide is E3 ubiquitin-protein ligase RDUF1 (Arabidopsis thaliana (Mouse-ear cress)).